The sequence spans 104 residues: Gastrin (104 aa).

The N-terminal stretch at 1–21 (MQRLCAHALILVLALAAFCEA) is a signal peptide. The propeptide occupies 22–58 (SWKPHSQLQDAPVAPGANKGQEPLRMDRLGPASHPRR). The segment at 26-70 (HSQLQDAPVAPGANKGQEPLRMDRLGPASHPRRQLGLQDPPHMVA) is disordered. Y87 bears the Sulfotyrosine mark. F92 is modified (phenylalanine amide). S96 is modified (phosphoserine). A propeptide spanning residues 96-104 (SAEEGDQHP) is cleaved from the precursor.

This sequence belongs to the gastrin/cholecystokinin family. Post-translationally, sulfation enhances proteolytic processing, and blocks peptide degradation. Levels of sulfation differ between proteolytically-cleaved gastrins and between tissues.

It localises to the secreted. In terms of biological role, gastrin stimulates the stomach mucosa to produce and secrete hydrochloric acid and the pancreas to secrete its digestive enzymes. It also stimulates smooth muscle contraction and increases blood circulation and water secretion in the stomach and intestine. The protein is Gastrin (GAST) of Ovis aries (Sheep).